The chain runs to 139 residues: Hydrogenase maturation factor HypA (139 aa).

Ni(2+) is bound by residues Met1 and His2. The Zn(2+) site is built by Cys73 and Cys76. Residue His98 participates in Ni(2+) binding. 2 residues coordinate Zn(2+): Cys110 and Cys113.

Belongs to the HypA/HybF family. As to quaternary structure, monomer and homodimer. Could also form hexamers. Forms a complex with HypB.

Its function is as follows. Involved in the maturation of [NiFe] hydrogenases. Required for nickel insertion into the metal center of the hydrogenase. The chain is Hydrogenase maturation factor HypA from Thermococcus kodakarensis (strain ATCC BAA-918 / JCM 12380 / KOD1) (Pyrococcus kodakaraensis (strain KOD1)).